A 540-amino-acid chain; its full sequence is CUB domain-containing protein 2 (540 aa).

The N-terminal stretch at 1 to 22 (MLAEWGACLLLAVALLGPGLQA) is a signal peptide. At 23–516 (QAMEGVKCGG…VSMVAQDTSD (494 aa)) the chain is on the extracellular side. Intrachain disulfides connect C30–C56, C83–C106, C145–C171, C198–C218, C257–C283, and C314–C336. 3 CUB domains span residues 30 to 143 (CGGV…YQKD), 145 to 255 (CGGV…YFSG), and 257 to 373 (CQEV…YIGV). A glycan (N-linked (GlcNAc...) asparagine) is linked at N40. N267 carries N-linked (GlcNAc...) asparagine glycosylation. N377, N435, and N436 each carry an N-linked (GlcNAc...) asparagine glycan. The helical transmembrane segment at 517-537 (IVFLGLCILAGILMVIAIVVL) threads the bilayer. The Cytoplasmic portion of the chain corresponds to 538–540 (MLL).

It localises to the membrane. This is CUB domain-containing protein 2 (CDCP2) from Homo sapiens (Human).